We begin with the raw amino-acid sequence, 554 residues long: MAYYRTPHDVTALPAWQALQKHRDAMQSFSMREAFAADAKRFDQFSLSACGLFLDYSKNLITEQSRDLLVSLANEVGLQDAIKSMFSGEIINASEGRPVLHTALRRPVGDKLSVNGVNVMPEVHKVLNQITELVGRIHDGLWRGYSEKPITDVVNIGIGGSFLGPELVSEALLPYAQRGVRCHYLANIDGSEFHELSANLRAETTLFIVSSKSFNTLETLKNAMAARTWYLAQGGSEAELYRHFIAVSSNKAAAVAFGIREENIFPMWDWVGGRYSLWSAIGLPIALAIGTANFKELLSGAYTMDQHFQTAPFDKNMPVLLALLGVWYGNFWDANSHAILPYDHYLRNITKHLQQLDMESNGKSVLQDGTPVKTDTGPVIWGGVGCNGQHAYHQLLHQGTQLIPADFIVPVVSFNPVADHHQWLYANCLSQSQALMLGKTREEAEAELRAKGLNEADIEKLAPHKVIPGNRPSNTLVVERISPRRLGALVAMYEHKVFVQSVIWGINAFDQWGVELGKELGKGVYQRLVGSLEDSAEDGSTQGLINYFRGRHRG.

Glutamate 359 serves as the catalytic Proton donor. Active-site residues include histidine 390 and lysine 518.

This sequence belongs to the GPI family.

The protein resides in the cytoplasm. The catalysed reaction is alpha-D-glucose 6-phosphate = beta-D-fructose 6-phosphate. It functions in the pathway carbohydrate biosynthesis; gluconeogenesis. The protein operates within carbohydrate degradation; glycolysis; D-glyceraldehyde 3-phosphate and glycerone phosphate from D-glucose: step 2/4. Its function is as follows. Catalyzes the reversible isomerization of glucose-6-phosphate to fructose-6-phosphate. The chain is Glucose-6-phosphate isomerase from Pseudomonas putida (strain ATCC 700007 / DSM 6899 / JCM 31910 / BCRC 17059 / LMG 24140 / F1).